A 1361-amino-acid chain; its full sequence is DNA-directed RNA polymerase subunit beta' (1361 aa).

4 residues coordinate Zn(2+): cysteine 69, cysteine 71, cysteine 84, and cysteine 87. Residues aspartate 460, aspartate 462, and aspartate 464 each contribute to the Mg(2+) site. Cysteine 808, cysteine 882, cysteine 889, and cysteine 892 together coordinate Zn(2+).

This sequence belongs to the RNA polymerase beta' chain family. The RNAP catalytic core consists of 2 alpha, 1 beta, 1 beta' and 1 omega subunit. When a sigma factor is associated with the core the holoenzyme is formed, which can initiate transcription. It depends on Mg(2+) as a cofactor. Requires Zn(2+) as cofactor.

The catalysed reaction is RNA(n) + a ribonucleoside 5'-triphosphate = RNA(n+1) + diphosphate. Its function is as follows. DNA-dependent RNA polymerase catalyzes the transcription of DNA into RNA using the four ribonucleoside triphosphates as substrates. This is DNA-directed RNA polymerase subunit beta' from Rickettsia bellii (strain RML369-C).